A 184-amino-acid polypeptide reads, in one-letter code: Isopentenyl-diphosphate Delta-isomerase (184 aa).

2 residues coordinate Mn(2+): histidine 26 and histidine 33. A Nudix hydrolase domain is found at 31–165 (PLHLAFSCYL…PSAFSPWLGL (135 aa)). The active site involves cysteine 68. Histidine 70 contacts Mn(2+). Glutamate 88 contributes to the Mg(2+) binding site. Positions 115 and 117 each coordinate Mn(2+). Glutamate 117 is a catalytic residue.

This sequence belongs to the IPP isomerase type 1 family. Mg(2+) is required as a cofactor. It depends on Mn(2+) as a cofactor.

It localises to the cytoplasm. It carries out the reaction isopentenyl diphosphate = dimethylallyl diphosphate. Its pathway is isoprenoid biosynthesis; dimethylallyl diphosphate biosynthesis; dimethylallyl diphosphate from isopentenyl diphosphate: step 1/1. In terms of biological role, catalyzes the 1,3-allylic rearrangement of the homoallylic substrate isopentenyl (IPP) to its highly electrophilic allylic isomer, dimethylallyl diphosphate (DMAPP). The sequence is that of Isopentenyl-diphosphate Delta-isomerase from Paenarthrobacter aurescens (strain TC1).